Reading from the N-terminus, the 629-residue chain is tRNA uridine 5-carboxymethylaminomethyl modification enzyme MnmG (629 aa).

FAD contacts are provided by residues 14–19, V126, and S181; that span reads GAGHAG. 273-287 contributes to the NAD(+) binding site; sequence GPRYCPSIEDKVVRF. Position 370 (Q370) interacts with FAD.

It belongs to the MnmG family. In terms of assembly, homodimer. Heterotetramer of two MnmE and two MnmG subunits. FAD is required as a cofactor.

It localises to the cytoplasm. Its function is as follows. NAD-binding protein involved in the addition of a carboxymethylaminomethyl (cmnm) group at the wobble position (U34) of certain tRNAs, forming tRNA-cmnm(5)s(2)U34. The sequence is that of tRNA uridine 5-carboxymethylaminomethyl modification enzyme MnmG from Bacillus cereus (strain ZK / E33L).